The chain runs to 566 residues: Phosphatidylinositol 4-kinase gamma 4 (566 aa).

2 consecutive Ubiquitin-like domains span residues T34–Q111 and V112–R190. Over residues D250–E263 the composition is skewed to polar residues. Positions D250–Q272 are disordered. The region spanning G255–A547 is the PI3K/PI4K catalytic domain. Residues S261–G267 form a G-loop region. ATP-binding positions include S262 to A268, K284, and Q374 to T377. Residues A407–N415 are catalytic loop. The activation loop stretch occupies residues P430–K456. D432 contacts ATP.

It belongs to the PI3/PI4-kinase family. Type II PI4K subfamily. Interacts with RPN10, UFD1 and CDC48 in vitro. Autophosphorylated.

It localises to the membrane. It catalyses the reaction a 1,2-diacyl-sn-glycero-3-phospho-(1D-myo-inositol) + ATP = a 1,2-diacyl-sn-glycero-3-phospho-(1D-myo-inositol 4-phosphate) + ADP + H(+). Functionally, the phosphorylation of phosphatidylinositol (PI) to PI4P is the first committed step in the generation of phosphatidylinositol 4,5-bisphosphate (PIP2), a precursor of the second messenger inositol 1,4,5-trisphosphate (InsP3). Undergoes autophosphorylation and phosphorylates serine/threonine residues of protein substrates. Phosphorylates RPN10 and UFD1 in vitro. The chain is Phosphatidylinositol 4-kinase gamma 4 from Arabidopsis thaliana (Mouse-ear cress).